A 229-amino-acid chain; its full sequence is Dolichyldiphosphatase 1 (229 aa).

4 consecutive transmembrane segments (helical) span residues 27-47 (LFNA…ITLI), 94-114 (MPSS…LFYL), 120-140 (FGSK…AAGV), and 156-176 (FCGS…IEYI).

This sequence belongs to the dolichyldiphosphatase family.

Its subcellular location is the endoplasmic reticulum membrane. It carries out the reaction a di-trans,poly-cis-dolichyl diphosphate + H2O = a di-trans,poly-cis-dolichyl phosphate + phosphate + H(+). The protein operates within protein modification; protein glycosylation. Required for efficient N-glycosylation. Necessary for maintaining optimal levels of dolichol-linked oligosaccharides. Hydrolyzes dolichyl pyrophosphate at a very high rate and dolichyl monophosphate at a much lower rate. Does not act on phosphatidate. The protein is Dolichyldiphosphatase 1 (dolpp1) of Dictyostelium discoideum (Social amoeba).